Here is a 630-residue protein sequence, read N- to C-terminus: Replication protein A 70 kDa DNA-binding subunit B (630 aa).

The segment at residues 200–282 (IIKVRVTSKG…KTVHNDYEMT (83 aa)) is a DNA-binding region (OB). The C4-type zinc-finger motif lies at 496 to 516 (CKTCNKKVTEAIGSGYWCEGC).

Belongs to the replication factor A protein 1 family. In terms of assembly, heterotrimer of RPA1, RPA2 and RPA3 (canonical replication protein A complex). Interacts with RPA2A. Expressed in root tips, roots, shoot apical meristem (SAM) and young leaves, and at lower levels in mature leaves, flag leaves and ears.

It is found in the nucleus. Functionally, component of the replication protein A complex (RPA) required for DNA recombination, repair and replication. The activity of RPA is mediated by single-stranded DNA binding and protein interactions. Probably involved in repair of double-strand DNA breaks (DSBs) induced by genotoxic stresses. In Oryza sativa subsp. japonica (Rice), this protein is Replication protein A 70 kDa DNA-binding subunit B (RPA1B).